We begin with the raw amino-acid sequence, 75 residues long: Protein Tlp homolog (75 aa).

Residues 52 to 75 (RREALDGMREEIKDEARDKKNGYM) are disordered.

It belongs to the Tlp family.

This chain is Protein Tlp homolog, found in Clostridium botulinum (strain Okra / Type B1).